A 371-amino-acid polypeptide reads, in one-letter code: Cytochrome b (371 aa).

Helical transmembrane passes span 25-45 (FGSM…FLAI), 69-90 (WIMQ…YIHI), 105-125 (WLSG…GYVL), and 170-190 (FFAL…IHII). His75 and His89 together coordinate heme b. Positions 174 and 188 each coordinate heme b. His193 is a binding site for a ubiquinone. Helical transmembrane passes span 218–238 (YKDT…LSFS), 280–300 (LGGT…PFTH), 312–332 (LAQM…WTAS), and 339–358 (FIII…IMNP).

This sequence belongs to the cytochrome b family. The cytochrome bc1 complex contains 3 respiratory subunits (MT-CYB, CYC1 and UQCRFS1), 2 core proteins (UQCRC1 and UQCRC2) and probably 6 low-molecular weight proteins. Heme b is required as a cofactor.

It is found in the mitochondrion inner membrane. Its function is as follows. Component of the ubiquinol-cytochrome c reductase complex (complex III or cytochrome b-c1 complex) that is part of the mitochondrial respiratory chain. The b-c1 complex mediates electron transfer from ubiquinol to cytochrome c. Contributes to the generation of a proton gradient across the mitochondrial membrane that is then used for ATP synthesis. This is Cytochrome b (MT-CYB) from Sinomicrurus kelloggi (Kellogg's coral snake).